The following is a 322-amino-acid chain: Phosphatidylserine decarboxylase proenzyme (322 aa).

Active-site charge relay system; for autoendoproteolytic cleavage activity residues include aspartate 90, histidine 147, and serine 254. The Schiff-base intermediate with substrate; via pyruvic acid; for decarboxylase activity role is filled by serine 254. At serine 254 the chain carries Pyruvic acid (Ser); by autocatalysis. The segment at 290 to 322 is disordered; sequence FVTPDSEPAPLPAEEIEAEHDASPLVDDKKDQV. Positions 308–322 are enriched in basic and acidic residues; it reads EHDASPLVDDKKDQV.

The protein belongs to the phosphatidylserine decarboxylase family. PSD-B subfamily. Prokaryotic type I sub-subfamily. In terms of assembly, heterodimer of a large membrane-associated beta subunit and a small pyruvoyl-containing alpha subunit. The cofactor is pyruvate. In terms of processing, is synthesized initially as an inactive proenzyme. Formation of the active enzyme involves a self-maturation process in which the active site pyruvoyl group is generated from an internal serine residue via an autocatalytic post-translational modification. Two non-identical subunits are generated from the proenzyme in this reaction, and the pyruvate is formed at the N-terminus of the alpha chain, which is derived from the carboxyl end of the proenzyme. The autoendoproteolytic cleavage occurs by a canonical serine protease mechanism, in which the side chain hydroxyl group of the serine supplies its oxygen atom to form the C-terminus of the beta chain, while the remainder of the serine residue undergoes an oxidative deamination to produce ammonia and the pyruvoyl prosthetic group on the alpha chain. During this reaction, the Ser that is part of the protease active site of the proenzyme becomes the pyruvoyl prosthetic group, which constitutes an essential element of the active site of the mature decarboxylase.

It is found in the cell membrane. It carries out the reaction a 1,2-diacyl-sn-glycero-3-phospho-L-serine + H(+) = a 1,2-diacyl-sn-glycero-3-phosphoethanolamine + CO2. It participates in phospholipid metabolism; phosphatidylethanolamine biosynthesis; phosphatidylethanolamine from CDP-diacylglycerol: step 2/2. Functionally, catalyzes the formation of phosphatidylethanolamine (PtdEtn) from phosphatidylserine (PtdSer). This Escherichia fergusonii (strain ATCC 35469 / DSM 13698 / CCUG 18766 / IAM 14443 / JCM 21226 / LMG 7866 / NBRC 102419 / NCTC 12128 / CDC 0568-73) protein is Phosphatidylserine decarboxylase proenzyme.